The following is a 357-amino-acid chain: Histidine biosynthesis bifunctional protein HisB (357 aa).

The tract at residues 1-168 (MTPILFIDRD…GIAHALADAP (168 aa)) is histidinol-phosphatase. The active-site Nucleophile is the D8. Mg(2+) is bound by residues D8, D10, and D128. D10 serves as the catalytic Proton donor. Residues 169 to 357 (RIAVVQRDTK…TALPTTKGAL (189 aa)) form an imidazoleglycerol-phosphate dehydratase region.

The protein in the N-terminal section; belongs to the histidinol-phosphatase family. In the C-terminal section; belongs to the imidazoleglycerol-phosphate dehydratase family. The cofactor is Mg(2+).

It is found in the cytoplasm. The enzyme catalyses D-erythro-1-(imidazol-4-yl)glycerol 3-phosphate = 3-(imidazol-4-yl)-2-oxopropyl phosphate + H2O. The catalysed reaction is L-histidinol phosphate + H2O = L-histidinol + phosphate. It functions in the pathway amino-acid biosynthesis; L-histidine biosynthesis; L-histidine from 5-phospho-alpha-D-ribose 1-diphosphate: step 6/9. The protein operates within amino-acid biosynthesis; L-histidine biosynthesis; L-histidine from 5-phospho-alpha-D-ribose 1-diphosphate: step 8/9. The polypeptide is Histidine biosynthesis bifunctional protein HisB (Stenotrophomonas maltophilia (strain R551-3)).